Consider the following 134-residue polypeptide: Small ribosomal subunit protein bS16 (134 aa).

Residues Ala79–Glu134 form a disordered region. A compositionally biased stretch (low complexity) spans Ala115–Glu134.

This sequence belongs to the bacterial ribosomal protein bS16 family.

The polypeptide is Small ribosomal subunit protein bS16 (Brucella suis (strain ATCC 23445 / NCTC 10510)).